The following is a 67-amino-acid chain: Conotoxin Im3.1 (67 aa).

The first 20 residues, Met1–Ala20, serve as a signal peptide directing secretion. Positions Arg21–Arg52 are excised as a propeptide. 3 disulfide bridges follow: Cys53–Cys63, Cys54–Cys61, and Cys59–Cys64.

This sequence belongs to the conotoxin M superfamily. In terms of tissue distribution, expressed by the venom duct.

It is found in the secreted. Probable neurotoxin. This is Conotoxin Im3.1 from Conus imperialis (Imperial cone).